The chain runs to 107 residues: Large ribosomal subunit protein uL23 (107 aa).

It belongs to the universal ribosomal protein uL23 family. In terms of assembly, part of the 50S ribosomal subunit. Contacts protein L29, and trigger factor when it is bound to the ribosome.

One of the early assembly proteins it binds 23S rRNA. One of the proteins that surrounds the polypeptide exit tunnel on the outside of the ribosome. Forms the main docking site for trigger factor binding to the ribosome. The protein is Large ribosomal subunit protein uL23 of Gluconobacter oxydans (strain 621H) (Gluconobacter suboxydans).